A 511-amino-acid polypeptide reads, in one-letter code: MSGVWGAGGPRCQAALAVLASLCRARPPPLGLDVETCQSFELQPPEQSPSAADSGTSVSLLAVVVIVCGVALVAVFFFLFWKLCWMPWRNKEASSPSSANPASEILQSPSSRGNMADKLKDPSALGFLEAAVKISHTSPDIPAEVQMSVKEHIMRHTKLQRQTTEPASSTRHTSFKRHLPRQMHVSSVDYGNELPPAAAEQPTSIGRIKPELYKQKSVDGDEAKSEAAKSCGKINFSLRYDYESETLIVRILKAFDLPAKDFCGSSDPYVKIYLLPDRKCKLQTRVHRKTLNPTFDENFHFPVPYEELADRKLHLSVFDFDRFSRHDMIGEVILDNLFEASDLSRETSIWKDIQYATSESVDLGEIMFSLCYLPTAGRLTLTVIKCRNLKAMDITGYSDPYVKVSLLCDGRRLKKKKTTIKKNTLNPVYNEAIIFDIPPENMDQVSLLISVMDYDRVGHNEIIGVCRVGISAEGLGRDHWNEMLAYPRKPIAHWHCLAEVKKSFKEGTPRL.

Residues 1–59 (MSGVWGAGGPRCQAALAVLASLCRARPPPLGLDVETCQSFELQPPEQSPSAADSGTSVS) are Vesicular-facing. The interval 12–38 (CQAALAVLASLCRARPPPLGLDVETCQ) is cysteine motif. A helical membrane pass occupies residues 60 to 80 (LLAVVVIVCGVALVAVFFFLF). Topologically, residues 81-511 (WKLCWMPWRN…KSFKEGTPRL (431 aa)) are cytoplasmic. Over residues 93–103 (ASSPSSANPAS) the composition is skewed to low complexity. Disordered regions lie at residues 93 to 118 (ASSP…MADK) and 157 to 182 (TKLQ…LPRQ). Polar residues predominate over residues 160-172 (QRQTTEPASSTRH). Ser217 is subject to Phosphoserine. C2 domains follow at residues 230–351 (SCGK…SIWK) and 362–495 (DLGE…AHWH). Residues Asp261, Asp267, Asp319, Phe320, Asp321, Ser324, Asp327, Asp393, Asp399, Asp453, and Asp455 each contribute to the Ca(2+) site. A necessary for cell membrane association (isoform 2) region spans residues 483–511 (MLAYPRKPIAHWHCLAEVKKSFKEGTPRL).

The protein belongs to the synaptotagmin family. In terms of assembly, isoform 1: Homodimer; disulfide-linked via the cysteine motif. Isoform 1: Can also form heterodimers with SYT3, SYT7, SYT9 and SYT10. Isoform 1: Interacts with STX1A, STX1B and STX2; the interaction is Ca(2+)-dependent. Isoform 2: Is not able to form homodimer and heterodimers. The cofactor is Ca(2+).

It is found in the cytoplasmic vesicle. Its subcellular location is the secretory vesicle. The protein localises to the synaptic vesicle membrane. It localises to the membrane. The protein resides in the cytoplasm. It is found in the cytosol. Its subcellular location is the cell membrane. Its function is as follows. May be involved in Ca(2+)-dependent exocytosis of secretory vesicles through Ca(2+) and phospholipid binding to the C2 domain or may serve as Ca(2+) sensors in the process of vesicular trafficking and exocytosis. May mediate Ca(2+)-regulation of exocytosis in acrosomal reaction in sperm. This Rattus norvegicus (Rat) protein is Synaptotagmin-6 (Syt6).